Consider the following 814-residue polypeptide: MKEFPKHYNFIENEKKWQHIWQELQIYAYNPNMSKEGIYIVDTPPPTVSGQLHIGHIYSYTQTDFIVRFQRMIGKNIFYPIGFDDNGLPTERLVEKQKQIKAYNMERDEFIKICQEVVQNEEAKFRNLFKQIALSVDWSLEYQTISPLSRKISQMSFLDLLHKGEVYRANQPILWDTVDGTALAQADIEDKQKISSMNYIMFKTEQGDKLTIATTRPELLPACVAVFYHPDDGRYKHLADKSAITPLFNEKVPILADPLVQQDKGTGLVMCCTFGDQTDITWWKSHNLPLKTIITKKGTINFPHKIDLDGLTIKEARTKIIDILKEQNLLTKQEEITQTVKCAERSGAPLEILTVTQWFIKTITHKEALLKRTNELNWYPKNMQMRLENWINSLSWDWCISRQRYFGVPFPIWYSKRIGEEGKILYADISQLPVDPLKDLPIGYSKEEVDPDLDVMDTWATSSVSPQLSTYGISEDFAINKVRHDKLFPMDLRPQAHEIIRTWAFYTILKSHLHQNILPWKNIMVSGWCLAEDRSKMSKSKGNVLVPEKLLERYGADVIRYWSANSKLGADTAYSEDIMKNGKRLVNKLWNAAKFVSIHFDKLTSEDKKVSLCAIKEKITHEFDQWIINKLVALVKLATNALQNYEYANAIYLTEKFFWSIFCDNYLEISKTRSYDEGNKNPQGQYSSILTSYHVMQTLLKLFAPFMPHITEELYQILYSKNSIHIQGNWVNYGDLNYDIDVQGPEGLLTILDIVRKFKAEYNLSIKAPIKLLEVSGIILSTELVEDLKNVTSAEAIQFEMKDDKIKVNIKLFV.

The 'HIGH' region motif lies at 46-56 (PTVSGQLHIGH). Residues 536 to 540 (KMSKS) carry the 'KMSKS' region motif. Lys539 provides a ligand contact to ATP.

It belongs to the class-I aminoacyl-tRNA synthetase family. ValS type 2 subfamily. Monomer.

It is found in the cytoplasm. It catalyses the reaction tRNA(Val) + L-valine + ATP = L-valyl-tRNA(Val) + AMP + diphosphate. Functionally, catalyzes the attachment of valine to tRNA(Val). As ValRS can inadvertently accommodate and process structurally similar amino acids such as threonine, to avoid such errors, it has a 'posttransfer' editing activity that hydrolyzes mischarged Thr-tRNA(Val) in a tRNA-dependent manner. The sequence is that of Valine--tRNA ligase from Rickettsia typhi (strain ATCC VR-144 / Wilmington).